The primary structure comprises 332 residues: ATP-dependent 6-phosphofructokinase (332 aa).

Gly-11 serves as a coordination point for ATP. 21–25 (RSVVR) contributes to the ADP binding site. ATP is bound by residues 72–73 (RC) and 102–105 (GDGS). Asp-103 serves as a coordination point for Mg(2+). 126–128 (TID) provides a ligand contact to substrate. The active-site Proton acceptor is Asp-128. Arg-155 contributes to the ADP binding site. Substrate contacts are provided by residues Arg-163 and 170–172 (MGR). Residues 186 to 188 (GAE), Arg-212, and 214 to 216 (KLH) contribute to the ADP site. Substrate is bound by residues Glu-223, Arg-256, and 262–265 (HIQR).

Belongs to the phosphofructokinase type A (PFKA) family. ATP-dependent PFK group I subfamily. Prokaryotic clade 'B1' sub-subfamily. As to quaternary structure, homotetramer. Requires Mg(2+) as cofactor.

The protein localises to the cytoplasm. It catalyses the reaction beta-D-fructose 6-phosphate + ATP = beta-D-fructose 1,6-bisphosphate + ADP + H(+). It functions in the pathway carbohydrate degradation; glycolysis; D-glyceraldehyde 3-phosphate and glycerone phosphate from D-glucose: step 3/4. Allosterically activated by ADP and other diphosphonucleosides, and allosterically inhibited by phosphoenolpyruvate. In terms of biological role, catalyzes the phosphorylation of D-fructose 6-phosphate to fructose 1,6-bisphosphate by ATP, the first committing step of glycolysis. The polypeptide is ATP-dependent 6-phosphofructokinase (Halothermothrix orenii (strain H 168 / OCM 544 / DSM 9562)).